The chain runs to 103 residues: uncharacterized protein (103 aa).

Residues 10–63 enclose the CHCH domain; the sequence is FPECDHLKQIYDKCFTEFFQKFITPNYRHQYAVNPCERLHDVYKRCVEERLATQ. Short sequence motifs (cx9C motif) lie at residues 13-23 and 45-55; these read CDHLKQIYDKC and CERLHDVYKRC. Disulfide bonds link cysteine 13/cysteine 55 and cysteine 23/cysteine 45. Basic and acidic residues predominate over residues 80–90; it reads TDDDKLKDRQN. Residues 80–103 are disordered; that stretch reads TDDDKLKDRQNNQKTNSENKCSSS. The span at 91–103 shows a compositional bias: polar residues; sequence NQKTNSENKCSSS.

Belongs to the TRIAP1/MDM35 family.

This is an uncharacterized protein from Caenorhabditis elegans.